The following is a 450-amino-acid chain: Probable ECA polymerase (450 aa).

Helical transmembrane passes span 6–26 (FSGL…LTWF), 37–57 (VFFS…TSVL), 63–83 (VGVA…CFYA), 118–138 (VILM…NGFL), 155–175 (GVAL…VYFL), 181–201 (AWLF…MIVG), 207–227 (IIIA…ISLW), 228–248 (MLAA…LKRY), 341–361 (LVVM…GLII), 378–398 (YKAA…IVLA), and 410–430 (VFFI…YWLF).

Belongs to the WzyE family. In terms of assembly, probably part of a complex composed of WzxE, WzyE and WzzE.

The protein resides in the cell inner membrane. It participates in bacterial outer membrane biogenesis; enterobacterial common antigen biosynthesis. In terms of biological role, probably involved in the polymerization of enterobacterial common antigen (ECA) trisaccharide repeat units. The sequence is that of Probable ECA polymerase from Escherichia coli O17:K52:H18 (strain UMN026 / ExPEC).